The primary structure comprises 276 residues: Diaminopimelate epimerase (276 aa).

Substrate contacts are provided by Asn13, Gln46, and Asn66. Cys75 (proton donor) is an active-site residue. Substrate-binding positions include 76 to 77 (GN), Asn159, Asn192, and 210 to 211 (ER). Cys219 functions as the Proton acceptor in the catalytic mechanism. 220–221 (GT) is a binding site for substrate.

The protein belongs to the diaminopimelate epimerase family. As to quaternary structure, homodimer.

It localises to the cytoplasm. It catalyses the reaction (2S,6S)-2,6-diaminopimelate = meso-2,6-diaminopimelate. It participates in amino-acid biosynthesis; L-lysine biosynthesis via DAP pathway; DL-2,6-diaminopimelate from LL-2,6-diaminopimelate: step 1/1. Functionally, catalyzes the stereoinversion of LL-2,6-diaminopimelate (L,L-DAP) to meso-diaminopimelate (meso-DAP), a precursor of L-lysine and an essential component of the bacterial peptidoglycan. In Pseudomonas fluorescens, this protein is Diaminopimelate epimerase.